The primary structure comprises 370 residues: Polyadenylate-binding protein 4-like (370 aa).

RRM domains follow at residues 10–88, 98–174, 190–267, and 293–369; these read ASLY…WSQR, GNVF…RFKN, TNVY…RAQK, and VKLY…LAQR.

The protein belongs to the polyadenylate-binding protein type-1 family.

In terms of biological role, may bind RNA. This chain is Polyadenylate-binding protein 4-like (PABPC4L), found in Homo sapiens (Human).